Here is a 428-residue protein sequence, read N- to C-terminus: Probable 4-methylmuconolactone transporter (428 aa).

Residues methionine 1 to aspartate 26 lie on the Cytoplasmic side of the membrane. A helical transmembrane segment spans residues serine 27–threonine 47. Residues lysine 48–glutamate 50 lie on the Periplasmic side of the membrane. Residues valine 51–isoleucine 71 form a helical membrane-spanning segment. Over leucine 72–arginine 80 the chain is Cytoplasmic. Residues isoleucine 81–serine 101 form a helical membrane-spanning segment. The Periplasmic segment spans residues tyrosine 102 to threonine 110. Residues leucine 111–isoleucine 131 traverse the membrane as a helical segment. Over aspartate 132 to serine 145 the chain is Cytoplasmic. The chain crosses the membrane as a helical span at residues glycine 146 to proline 166. Position 167 (lysine 167) is a topological domain, periplasmic. The helical transmembrane segment at glutamate 168–isoleucine 188 threads the bilayer. The Cytoplasmic portion of the chain corresponds to arginine 189–serine 227. Residues valine 228–leucine 248 traverse the membrane as a helical segment. Residues asparagine 249–glutamine 252 lie on the Periplasmic side of the membrane. Residues valine 253 to phenylalanine 273 traverse the membrane as a helical segment. The Cytoplasmic portion of the chain corresponds to alanine 274–proline 287. Residues threonine 288–leucine 308 traverse the membrane as a helical segment. Over asparagine 309–alanine 314 the chain is Periplasmic. The chain crosses the membrane as a helical span at residues isoleucine 315–leucine 335. Over serine 336–lysine 356 the chain is Cytoplasmic. A helical transmembrane segment spans residues serine 357–threonine 371. Over histidine 372–asparagine 377 the chain is Periplasmic. Residues alanine 378–proline 398 traverse the membrane as a helical segment. At glutamate 399–serine 428 the chain is on the cytoplasmic side.

It belongs to the major facilitator superfamily. Sugar transporter (TC 2.A.1.1) family.

The protein resides in the cell inner membrane. Functionally, probable uptake of 4-methylmuconolactone. This Cupriavidus pinatubonensis (strain JMP 134 / LMG 1197) (Cupriavidus necator (strain JMP 134)) protein is Probable 4-methylmuconolactone transporter.